A 51-amino-acid polypeptide reads, in one-letter code: Putative antitoxin VapB6 (51 aa).

Its function is as follows. Antitoxin component of a possible type II toxin-antitoxin (TA) system. The cognate toxin is VapC6. This is Putative antitoxin VapB6 (vapB6) from Mycobacterium tuberculosis (strain CDC 1551 / Oshkosh).